The following is a 569-amino-acid chain: Glutamate--tRNA ligase (569 aa).

A 'HIGH' region motif is present at residues 99–109 (PEPNGYPTLGH).

It belongs to the class-I aminoacyl-tRNA synthetase family. Glutamate--tRNA ligase type 2 subfamily.

The protein localises to the cytoplasm. It carries out the reaction tRNA(Glu) + L-glutamate + ATP = L-glutamyl-tRNA(Glu) + AMP + diphosphate. Its function is as follows. Catalyzes the attachment of glutamate to tRNA(Glu) in a two-step reaction: glutamate is first activated by ATP to form Glu-AMP and then transferred to the acceptor end of tRNA(Glu). The sequence is that of Glutamate--tRNA ligase from Korarchaeum cryptofilum (strain OPF8).